A 171-amino-acid chain; its full sequence is Ribosome maturation factor RimM (171 aa).

In terms of domain architecture, PRC barrel spans 97 to 170; the sequence is EGEYYYHEVI…QVTIHVMEGL (74 aa).

Belongs to the RimM family. Binds ribosomal protein uS19.

The protein localises to the cytoplasm. An accessory protein needed during the final step in the assembly of 30S ribosomal subunit, possibly for assembly of the head region. Essential for efficient processing of 16S rRNA. May be needed both before and after RbfA during the maturation of 16S rRNA. It has affinity for free ribosomal 30S subunits but not for 70S ribosomes. This chain is Ribosome maturation factor RimM, found in Bacillus cytotoxicus (strain DSM 22905 / CIP 110041 / 391-98 / NVH 391-98).